Reading from the N-terminus, the 699-residue chain is Conditioned medium factor (699 aa).

The signal sequence occupies residues 1–18; it reads MRLLLLLILIITINFSYG. 4 N-linked (GlcNAc...) asparagine glycosylation sites follow: asparagine 130, asparagine 283, asparagine 346, and asparagine 430. Positions 680 to 699 are disordered; the sequence is SPQQTTNTEYNKEMSSNSVW.

In terms of processing, N- and O-glycosylated. The N-terminus is blocked.

Its function is as follows. Involved in cell density sensing and might synchronize the onset of development by triggering aggregation when a majority of the cells in a given area have starved. This is Conditioned medium factor (cmfA) from Dictyostelium discoideum (Social amoeba).